A 73-amino-acid polypeptide reads, in one-letter code: MAKDEIIEFEGEVIDTLPNTLFKVRLENGHEIIAHISGKMRKHYIRILTGDKVKVEMTPYDLSKGRITYRGKN.

The S1-like domain maps to 1–72 (MAKDEIIEFE…SKGRITYRGK (72 aa)).

Belongs to the IF-1 family. In terms of assembly, component of the 30S ribosomal translation pre-initiation complex which assembles on the 30S ribosome in the order IF-2 and IF-3, IF-1 and N-formylmethionyl-tRNA(fMet); mRNA recruitment can occur at any time during PIC assembly.

The protein resides in the cytoplasm. One of the essential components for the initiation of protein synthesis. Stabilizes the binding of IF-2 and IF-3 on the 30S subunit to which N-formylmethionyl-tRNA(fMet) subsequently binds. Helps modulate mRNA selection, yielding the 30S pre-initiation complex (PIC). Upon addition of the 50S ribosomal subunit IF-1, IF-2 and IF-3 are released leaving the mature 70S translation initiation complex. This Psychrobacter arcticus (strain DSM 17307 / VKM B-2377 / 273-4) protein is Translation initiation factor IF-1.